We begin with the raw amino-acid sequence, 314 residues long: MPNLKAIRDRIQSVKNTKKITEAMRLVAAAKVRRAQEQVIATRPFADALANVLYNLLNRLQYGDVSLPLLQQRQVKTVALVVVSGDRGLCGGYNTYVIRRAEQRQKELEAQGINYRLITIGRKATQYFSRRQAPIEKTYVGLNQIPTADEAGSIADELLSLFLSETVDRVELIYTRFVSLISSRPVVQTLLPLTVQGLEVEDDEVFRLITRDGKLRVERETIAQEVSSFPQDMIFEQDPIQILDALLPLYINNQLLRGLQEAAASELAARMTAMSNASDNAGQLIGTLTLSYNKARQAAITQQLMEVVAGANAL.

Belongs to the ATPase gamma chain family. As to quaternary structure, F-type ATPases have 2 components, CF(1) - the catalytic core - and CF(0) - the membrane proton channel. CF(1) has five subunits: alpha(3), beta(3), gamma(1), delta(1), epsilon(1). CF(0) has three main subunits: a, b and c.

The protein localises to the cellular thylakoid membrane. Functionally, produces ATP from ADP in the presence of a proton gradient across the membrane. The gamma chain is believed to be important in regulating ATPase activity and the flow of protons through the CF(0) complex. The polypeptide is ATP synthase gamma chain (Rippkaea orientalis (strain PCC 8801 / RF-1) (Cyanothece sp. (strain PCC 8801))).